Consider the following 386-residue polypeptide: TGF-beta-activated kinase 1 and MAP3K7-binding protein 1 (386 aa).

In terms of domain architecture, PPM-type phosphatase spans 22 to 327; the sequence is HSCRYSKQKN…EEMTVIYVKL (306 aa).

Interacts with mom-4; the interaction enhances mom-4 kinase activity.

Its function is as follows. Involved in the Wnt signaling pathway by regulating mom-4 kinase activity. This Caenorhabditis elegans protein is TGF-beta-activated kinase 1 and MAP3K7-binding protein 1.